Consider the following 453-residue polypeptide: MGSKTPDGHRQSPDASNSSELKPASPNPKPSQNGSQSADLDRGVVGEDDDDDDENEEVGVITTNAEKKKKRKKSKKKNKKSKSGAAPATQQTTPPRVPLSTLFPSGYPVGELVPYENTARTTDEESQYNSRLWDEDLLTDYRQAAEIHRQVRQYAQAELIKPGASLQSIAEGIEDGVRALCGHQGLDTGDALKAGMGFPTGLCLNNIAAHWTPNPGGKDVILEKSDVLKVDFGVHINGRIVDSAFTVAFDHTYDNLLTAVKEATNTGIMVHVFLDDLVGSEVMESYEVDLAGKTIPVKAIRNITGHDILRYNIHGGKQIPFIKNNNPDKMEEGEVFAIETFGSTGKGVLDDDIGIYGYGRNANVPGSHLRLASAKSLLKTIDANFGSLVFCRRYLERLGVKSYHLGMKNLIDNGIVESYAPLVDVKGSYTAQFEHTILLHSGGKEVISRGEDY.

Residues 1–12 (MGSKTPDGHRQS) show a composition bias toward basic and acidic residues. Residues 1–101 (MGSKTPDGHR…TTPPRVPLST (101 aa)) form a disordered region. Positions 46–57 (GEDDDDDDENEE) are enriched in acidic residues. Basic residues predominate over residues 67 to 82 (KKKKRKKSKKKNKKSK). Substrate is bound at residue His210. Residues Asp231, Asp242, and His306 each contribute to the a divalent metal cation site. Substrate is bound at residue His314. A divalent metal cation-binding residues include Glu339 and Glu434.

This sequence belongs to the peptidase M24A family. Methionine aminopeptidase eukaryotic type 2 subfamily. Co(2+) serves as cofactor. It depends on Zn(2+) as a cofactor. The cofactor is Mn(2+). Requires Fe(2+) as cofactor.

Its subcellular location is the cytoplasm. The catalysed reaction is Release of N-terminal amino acids, preferentially methionine, from peptides and arylamides.. In terms of biological role, cotranslationally removes the N-terminal methionine from nascent proteins. The N-terminal methionine is often cleaved when the second residue in the primary sequence is small and uncharged (Met-Ala-, Cys, Gly, Pro, Ser, Thr, or Val). The chain is Methionine aminopeptidase 2-1 from Aspergillus terreus (strain NIH 2624 / FGSC A1156).